Reading from the N-terminus, the 89-residue chain is uncharacterized protein (89 aa).

2 helical membrane-spanning segments follow: residues 1–21 and 28–48; these read MFLA…ISLI and GISL…TIAA.

It localises to the cell membrane. This is an uncharacterized protein from Methanocaldococcus jannaschii (strain ATCC 43067 / DSM 2661 / JAL-1 / JCM 10045 / NBRC 100440) (Methanococcus jannaschii).